We begin with the raw amino-acid sequence, 147 residues long: Transthyretin (147 aa).

The signal sequence occupies residues 1 to 20 (MASHRLLLLCLAGLVFVSEA). Cysteine 30 bears the Sulfocysteine mark. Position 35 (lysine 35) interacts with L-thyroxine. Serine 72 bears the Phosphoserine mark. Glutamate 74 is a binding site for L-thyroxine. Asparagine 118 carries N-linked (GlcNAc...) asparagine glycosylation. Serine 137 provides a ligand contact to L-thyroxine.

Belongs to the transthyretin family. Homotetramer. Dimer of dimers. In the homotetramer, subunits assemble around a central channel that can accommodate two ligand molecules. Interacts with RBP4. Sulfonation of the reactive cysteine Cys-30 enhances the stability of the native conformation of TTR, avoiding misassembly of the protein leading to amyloid formation.

The protein resides in the secreted. In terms of biological role, thyroid hormone-binding protein. Probably transports thyroxine from the bloodstream to the brain. The polypeptide is Transthyretin (TTR) (Macaca fascicularis (Crab-eating macaque)).